Reading from the N-terminus, the 278-residue chain is Sulfur carrier protein FdhD (278 aa).

The active-site Cysteine persulfide intermediate is the cysteine 124.

This sequence belongs to the FdhD family.

Its subcellular location is the cytoplasm. In terms of biological role, required for formate dehydrogenase (FDH) activity. Acts as a sulfur carrier protein that transfers sulfur from IscS to the molybdenum cofactor prior to its insertion into FDH. The chain is Sulfur carrier protein FdhD from Burkholderia cenocepacia (strain ATCC BAA-245 / DSM 16553 / LMG 16656 / NCTC 13227 / J2315 / CF5610) (Burkholderia cepacia (strain J2315)).